We begin with the raw amino-acid sequence, 324 residues long: Tubulin alpha-8 chain (324 aa).

Residues Ser-15, Gly-19, Thr-20, Thr-54, Asn-81, and Asn-103 each coordinate GTP. The active site involves Glu-129.

The protein belongs to the tubulin family. In terms of assembly, dimer of alpha and beta chains. A typical microtubule is a hollow water-filled tube with an outer diameter of 25 nm and an inner diameter of 15 nM. Alpha-beta heterodimers associate head-to-tail to form protofilaments running lengthwise along the microtubule wall with the beta-tubulin subunit facing the microtubule plus end conferring a structural polarity. Microtubules usually have 13 protofilaments but different protofilament numbers can be found in some organisms and specialized cells. Requires Mg(2+) as cofactor. In terms of processing, some glutamate residues at the C-terminus are polyglycylated, resulting in polyglycine chains on the gamma-carboxyl group. Glycylation is mainly limited to tubulin incorporated into axonemes (cilia and flagella) whereas glutamylation is prevalent in neuronal cells, centrioles, axonemes, and the mitotic spindle. Both modifications can coexist on the same protein on adjacent residues, and lowering polyglycylation levels increases polyglutamylation, and reciprocally. The precise function of polyglycylation is still unclear. Post-translationally, some glutamate residues at the C-terminus are polyglutamylated, resulting in polyglutamate chains on the gamma-carboxyl group. Polyglutamylation plays a key role in microtubule severing by spastin (SPAST). SPAST preferentially recognizes and acts on microtubules decorated with short polyglutamate tails: severing activity by SPAST increases as the number of glutamates per tubulin rises from one to eight, but decreases beyond this glutamylation threshold.

It localises to the cytoplasm. Its subcellular location is the cytoskeleton. It catalyses the reaction GTP + H2O = GDP + phosphate + H(+). Its function is as follows. Tubulin is the major constituent of microtubules, a cylinder consisting of laterally associated linear protofilaments composed of alpha- and beta-tubulin heterodimers. Microtubules grow by the addition of GTP-tubulin dimers to the microtubule end, where a stabilizing cap forms. Below the cap, tubulin dimers are in GDP-bound state, owing to GTPase activity of alpha-tubulin. This chain is Tubulin alpha-8 chain, found in Gallus gallus (Chicken).